A 314-amino-acid polypeptide reads, in one-letter code: Lipoyl synthase (314 aa).

[4Fe-4S] cluster is bound by residues Cys-67, Cys-72, Cys-78, Cys-93, Cys-97, Cys-100, and Ser-306. One can recognise a Radical SAM core domain in the interval 79–295; that stretch reads FNRGTATFMI…KNYALSIGFK (217 aa).

Belongs to the radical SAM superfamily. Lipoyl synthase family. It depends on [4Fe-4S] cluster as a cofactor.

It localises to the cytoplasm. The enzyme catalyses [[Fe-S] cluster scaffold protein carrying a second [4Fe-4S](2+) cluster] + N(6)-octanoyl-L-lysyl-[protein] + 2 oxidized [2Fe-2S]-[ferredoxin] + 2 S-adenosyl-L-methionine + 4 H(+) = [[Fe-S] cluster scaffold protein] + N(6)-[(R)-dihydrolipoyl]-L-lysyl-[protein] + 4 Fe(3+) + 2 hydrogen sulfide + 2 5'-deoxyadenosine + 2 L-methionine + 2 reduced [2Fe-2S]-[ferredoxin]. It participates in protein modification; protein lipoylation via endogenous pathway; protein N(6)-(lipoyl)lysine from octanoyl-[acyl-carrier-protein]: step 2/2. Catalyzes the radical-mediated insertion of two sulfur atoms into the C-6 and C-8 positions of the octanoyl moiety bound to the lipoyl domains of lipoate-dependent enzymes, thereby converting the octanoylated domains into lipoylated derivatives. In Buchnera aphidicola subsp. Baizongia pistaciae (strain Bp), this protein is Lipoyl synthase.